We begin with the raw amino-acid sequence, 441 residues long: MTMLLDGGPQFPTLGVGGFGTARHHEMSNRDAGMGLNPFTEPSHAAAFKLSPASHDLSSSQSSAFTPQASGYANSLGHHAGQVPSYGGAAFNSTRDFLFRNRNSGIADSTSAGGQHGLFASHGPPGIGEPPGHLIFPGLHEQSSSHTSSNGHVVNGQMHLGLRGDIFGRPDPYRAVPSPRTDHYAAAQFHNYNHMNMSMNVAAHHGPGAFFRYMRQPIKQELSCKWLEESPMNRPQKTCDRTFSSMHELVTHMTMEHVGGPEQTNHICYWEECPRGGKSFKAKYKLVNHIRVHTGEKPFPCPFPGCGKIFARSENLKIHKRTHTGEKPFKCEFEGCDRRFANSSDRKKHMHVHTSDKPYICKVCDKSYTHPSSLRKHMKVHESQGSDSSPAASSGYESATPPAMVSANSEEPSKNSSATHQTNNSSHNTGLLPPNFNEWYV.

The C2H2-type 1; atypical zinc finger occupies 222 to 257 (LSCKWLEESPMNRPQKTCDRTFSSMHELVTHMTMEH). The C2H2-type 2; atypical zinc-finger motif lies at 266-293 (HICYWEECPRGGKSFKAKYKLVNHIRVH). 3 C2H2-type zinc fingers span residues 299 to 323 (FPCP…KRTH), 329 to 353 (FKCE…MHVH), and 359 to 381 (YICK…MKVH). The disordered stretch occupies residues 375–441 (RKHMKVHESQ…LPPNFNEWYV (67 aa)). The span at 383-399 (SQGSDSSPAASSGYESA) shows a compositional bias: low complexity. The segment covering 406-429 (SANSEEPSKNSSATHQTNNSSHNT) has biased composition (polar residues).

This sequence belongs to the GLI C2H2-type zinc-finger protein family.

The protein localises to the nucleus. It is found in the cytoplasm. Probably acts as a transcriptional activator. May bind to the minimal GLI-consensus sequence 5'-GGGTGGTC-3'. Can determine the ectodermal cell fate and promote the earliest step of neural and neural crest development. Involved in establishing left-right asymmetry in the embryo. This is Zinc finger protein ZIC 3 (zic3) from Xenopus tropicalis (Western clawed frog).